We begin with the raw amino-acid sequence, 609 residues long: Beta-(1--&gt;2)glucan export ATP-binding/permease protein NdvA (609 aa).

Positions 21-311 (GWILAGANLL…VVSFINSVFM (291 aa)) constitute an ABC transmembrane type-1 domain. Helical transmembrane passes span 22–42 (WILAGANLLLAGAQFAEPVLF), 68–88 (LLAVWAAFGLFTILCGVTVAL), 146–166 (EHFAAMMSLVVLLPLSLYINW), 167–187 (RLAILLFALCIVFTMLTTLVV), 248–268 (WWAVVTVMTRASTTITILAIF), and 285–305 (IVMFVSFATMLIQRLEQVVSF). In terms of domain architecture, ABC transporter spans 345-579 (VEFNDVSFSY…GGHFAQLAKA (235 aa)). 378 to 385 (GPTGAGKS) provides a ligand contact to ATP.

This sequence belongs to the ABC transporter superfamily. Beta-(1--&gt;2)glucan exporter (TC 3.A.1.108.1) family. As to quaternary structure, homodimer.

The protein localises to the cell inner membrane. It carries out the reaction [(1-&gt;2)-beta-D-glucosyl](n)(in) + ATP + H2O = [(1-&gt;2)-beta-D-glucosyl](n)(out) + ADP + phosphate + H(+). Functionally, involved in beta-(1--&gt;2)glucan export. Transmembrane domains (TMD) form a pore in the inner membrane and the ATP-binding domain (NBD) is responsible for energy generation. The chain is Beta-(1--&gt;2)glucan export ATP-binding/permease protein NdvA from Nitrobacter winogradskyi (strain ATCC 25391 / DSM 10237 / CIP 104748 / NCIMB 11846 / Nb-255).